Reading from the N-terminus, the 456-residue chain is Probable polygalacturonase At3g15720 (456 aa).

An N-terminal signal peptide occupies residues 1 to 23; that stretch reads MKKKTWFLNFSLFFLQIFTSSNA. 6 PbH1 repeats span residues 169-195, 196-217, 219-239, 249-270, 278-299, and 314-341; these read CNYV…DVGA, SSNV…AINS, TSNI…SIGS, VENV…RIKT, ARMI…IIDQ, and SSAV…DFRC. The active-site Proton donor is aspartate 210. Residue histidine 233 is part of the active site.

This sequence belongs to the glycosyl hydrolase 28 family.

It is found in the secreted. The protein localises to the cell wall. The catalysed reaction is (1,4-alpha-D-galacturonosyl)n+m + H2O = (1,4-alpha-D-galacturonosyl)n + (1,4-alpha-D-galacturonosyl)m.. This is Probable polygalacturonase At3g15720 from Arabidopsis thaliana (Mouse-ear cress).